We begin with the raw amino-acid sequence, 327 residues long: MSLTSDIKQELAQVHVAKNSVRAAEVSAILRFAGEMQAVGGKLVIEANLDSMQVGMRLQEFIQGLYNSRVDVHTVNPTVSRKTPRYLVRIIDNADEIARRTGLVTRSGHVVKGLAPSVVSGTISDAEAAWRGAFLANGSLSDPGRSSSLEVLCPGQESALALVGCARRIGIAAKTKDSRGFDRVNVRDAEAIGALLTRMGAQKTRMLWEEKRIKRESRTPANRLANFDDANLRRSARAAVAAAARVERAMKILGDDVPEHLAEAGQLRVQHRQASLEELGRLADPQMTKDAVAGRIRRLLTMADKRAEDLKIPDTNSVVTEDLLEEI.

Positions 275–308 (SLEELGRLADPQMTKDAVAGRIRRLLTMADKRAE) form a DNA-binding region, H-T-H motif.

This sequence belongs to the WhiA family.

Its function is as follows. Involved in cell division and chromosome segregation. The protein is Probable cell division protein WhiA of Corynebacterium glutamicum (strain ATCC 13032 / DSM 20300 / JCM 1318 / BCRC 11384 / CCUG 27702 / LMG 3730 / NBRC 12168 / NCIMB 10025 / NRRL B-2784 / 534).